A 617-amino-acid polypeptide reads, in one-letter code: Elongation factor 4 (617 aa).

The tr-type G domain maps to 17-198 (AIIRNFCIIA…KIVRDLPAPV (182 aa)). Residues 29–34 (DHGKST) and 145–148 (NKID) each bind GTP.

This sequence belongs to the TRAFAC class translation factor GTPase superfamily. Classic translation factor GTPase family. LepA subfamily.

It localises to the cell membrane. It catalyses the reaction GTP + H2O = GDP + phosphate + H(+). Functionally, required for accurate and efficient protein synthesis under certain stress conditions. May act as a fidelity factor of the translation reaction, by catalyzing a one-codon backward translocation of tRNAs on improperly translocated ribosomes. Back-translocation proceeds from a post-translocation (POST) complex to a pre-translocation (PRE) complex, thus giving elongation factor G a second chance to translocate the tRNAs correctly. Binds to ribosomes in a GTP-dependent manner. This chain is Elongation factor 4, found in Arthrobacter sp. (strain FB24).